The following is a 75-amino-acid chain: Putative sulfur carrier protein TsuB (75 aa).

The Cysteine persulfide intermediate role is filled by C13.

This sequence belongs to the sulfur carrier protein TusA family.

Its function is as follows. Involved in thiosulfate metabolism. The chain is Putative sulfur carrier protein TsuB from Escherichia coli (strain K12).